We begin with the raw amino-acid sequence, 172 residues long: Cytidylate kinase (172 aa).

4 to 12 (GPPGSGKST) is a binding site for ATP.

Belongs to the cytidylate kinase family. Type 2 subfamily.

It localises to the cytoplasm. The enzyme catalyses CMP + ATP = CDP + ADP. It carries out the reaction dCMP + ATP = dCDP + ADP. This Aeropyrum pernix (strain ATCC 700893 / DSM 11879 / JCM 9820 / NBRC 100138 / K1) protein is Cytidylate kinase (cmk).